Consider the following 156-residue polypeptide: Small ribosomal subunit protein uS7 (156 aa).

The protein belongs to the universal ribosomal protein uS7 family. In terms of assembly, part of the 30S ribosomal subunit. Contacts proteins S9 and S11.

One of the primary rRNA binding proteins, it binds directly to 16S rRNA where it nucleates assembly of the head domain of the 30S subunit. Is located at the subunit interface close to the decoding center, probably blocks exit of the E-site tRNA. In Heliobacterium modesticaldum (strain ATCC 51547 / Ice1), this protein is Small ribosomal subunit protein uS7.